The primary structure comprises 255 residues: Indole-3-glycerol phosphate synthase (255 aa).

This sequence belongs to the TrpC family.

The enzyme catalyses 1-(2-carboxyphenylamino)-1-deoxy-D-ribulose 5-phosphate + H(+) = (1S,2R)-1-C-(indol-3-yl)glycerol 3-phosphate + CO2 + H2O. It participates in amino-acid biosynthesis; L-tryptophan biosynthesis; L-tryptophan from chorismate: step 4/5. This is Indole-3-glycerol phosphate synthase from Streptococcus pneumoniae serotype 19F (strain G54).